A 104-amino-acid polypeptide reads, in one-letter code: MPRLCVCMLVLVLALATFSEASWKPRSQLQDASSGPRTNGALEQHQLEKLGPASHHRRQLGPQGPQHFIADLSKKQRPPMEEEEEAYGWMDFGRRSAEEEDQYN.

A signal peptide spans 1 to 21; it reads MPRLCVCMLVLVLALATFSEA. A propeptide spanning residues 22 to 58 is cleaved from the precursor; it reads SWKPRSQLQDASSGPRTNGALEQHQLEKLGPASHHRR. Positions 23-104 are disordered; that stretch reads WKPRSQLQDA…RSAEEEDQYN (82 aa). Residues 25 to 37 show a composition bias toward polar residues; the sequence is PRSQLQDASSGPR. Position 87 is a sulfotyrosine (Tyr-87). Residue Phe-92 is modified to Phenylalanine amide. At Ser-96 the chain carries Phosphoserine. Residues 96–104 constitute a propeptide that is removed on maturation; sequence SAEEEDQYN. The residue at position 103 (Tyr-103) is a Sulfotyrosine.

Belongs to the gastrin/cholecystokinin family. Sulfation on Tyr-87 enhances proteolytic processing, and blocks peptide degradation. Levels of sulfation differ between proteolytically-cleaved gastrins and between tissues.

It is found in the secreted. Its function is as follows. Gastrin stimulates the stomach mucosa to produce and secrete hydrochloric acid and the pancreas to secrete its digestive enzymes. It also stimulates smooth muscle contraction and increases blood circulation and water secretion in the stomach and intestine. The chain is Gastrin (Gast) from Rattus norvegicus (Rat).